A 161-amino-acid chain; its full sequence is Glutaredoxin-2, mitochondrial (161 aa).

Residues 1–19 (MLWRRAALAGTRLVWSRSG) constitute a mitochondrion transit peptide. A Phosphoserine modification is found at Ser-20. Residues 54 to 154 (VNQIQETISD…PLVHQCYLKK (101 aa)) form the Glutaredoxin domain. Cys-65 provides a ligand contact to [2Fe-2S] cluster. Residue Lys-71 coordinates glutathione. Cys-74 bears the S-glutathionyl cysteine; alternate mark. Cysteines 74 and 77 form a disulfide. The glutathione site is built by Gln-106 and Val-118. Cys-150 is a binding site for [2Fe-2S] cluster.

This sequence belongs to the glutaredoxin family. As to quaternary structure, monomer; active form. Homodimer; inactive form. The homodimer is probably linked by 1 2Fe-2S cluster.

The protein resides in the mitochondrion. The 2Fe-2S present in the homodimer leads to inactivation of the enzyme. The 2Fe-2S may serve as a redox sensor: the presence of one-electron oxidants or reductants leading to the loss of the 2Fe-2S cluster, subsequent monomerization and activation of the enzyme. Functionally, glutathione-dependent oxidoreductase that facilitates the maintenance of mitochondrial redox homeostasis upon induction of apoptosis by oxidative stress. Involved in response to hydrogen peroxide and regulation of apoptosis caused by oxidative stress. Acts as a very efficient catalyst of monothiol reactions because of its high affinity for protein glutathione-mixed disulfides. Can receive electrons not only from glutathione (GSH), but also from thioredoxin reductase supporting both monothiol and dithiol reactions. Efficiently catalyzes both glutathionylation and deglutathionylation of mitochondrial complex I, which in turn regulates the superoxide production by the complex. Overexpression decreases the susceptibility to apoptosis and prevents loss of cardiolipin and cytochrome c release. The polypeptide is Glutaredoxin-2, mitochondrial (GLRX2) (Pongo abelii (Sumatran orangutan)).